The primary structure comprises 1582 residues: ATP-binding cassette sub-family C member 8 (1582 aa).

The Extracellular segment spans residues 1-30 (MPLAFCGTENHSAAYRVDQGVLNNGCFVDA). Cys6 and Cys26 form a disulfide bridge. Asn10 carries an N-linked (GlcNAc...) asparagine glycan. Residues 31–47 (LNVVPHVFLLFITFPIL) traverse the membrane as a helical segment. The Cytoplasmic segment spans residues 48-72 (FIGWGSQSSKVHIHHSTWLHFPGHN). The chain crosses the membrane as a helical span at residues 73 to 89 (LRWILTFILLFVLVCEI). The Extracellular portion of the chain corresponds to 90–106 (AEGILSDGVTESRHLHL). The helical transmembrane segment at 107-123 (YMPAGMAFMAAITSVVY) threads the bilayer. The Cytoplasmic segment spans residues 124-136 (YHNIETSNFPKLL). Residues 137-153 (IALLIYWTLAFITKTIK) form a helical membrane-spanning segment. The Extracellular portion of the chain corresponds to 154-169 (FVKFYDHAIGFSQLRF). The chain crosses the membrane as a helical span at residues 170-186 (CLTGLLVILYGMLLLVE). Over 187-303 (VNVIRVRRYV…AFGRRLVLSS (117 aa)) the chain is Cytoplasmic. One can recognise an ABC transmembrane type-1 1 domain in the interval 299–602 (LVLSSTFRIL…LSSVVRSTVK (304 aa)). Residues 304-319 (TFRILADLLGFAGPLC) form a helical membrane-spanning segment. The Extracellular segment spans residues 320 to 356 (IFGIVDHLGKENHVFQPKTQFLGVYFVSSQEFLGNAY). Residues 357 to 372 (VLAVLLFLALLLQRTF) form a helical membrane-spanning segment. Over 373-438 (LQASYYVAIE…MWFFFLCPNL (66 aa)) the chain is Cytoplasmic. The helical transmembrane segment at 439-454 (WAMPVQIIVGVILLYY) threads the bilayer. The Extracellular segment spans residues 455-460 (ILGVSA). A helical transmembrane segment spans residues 461–473 (LIGAAVIILLAPV). Topologically, residues 474-541 (QYFVATKLSQ…SLRAFAVYTS (68 aa)) are cytoplasmic. The helical transmembrane segment at 542 to 557 (ISIFMNTAIPIAAVLI) threads the bilayer. The Extracellular portion of the chain corresponds to 558-576 (TFVGHVSFFKESDFSPSVA). The chain crosses the membrane as a helical span at residues 577-592 (FASLSLFHILVTPLFL). The Cytoplasmic portion of the chain corresponds to 593–1013 (LSSVVRSTVK…YLSSAGILLL (421 aa)). Positions 679-930 (VQIIGGFFTW…ECQLFEHWKT (252 aa)) constitute an ABC transporter 1 domain. The ATP site is built by Trp688, Gly716, Ser720, and Ser721. Ser720 lines the Mg(2+) pocket. Residues 741-768 (SSLPDSEGEDPSNPERETAADSDARSRG) are disordered. A compositionally biased stretch (basic and acidic residues) spans 753 to 766 (NPERETAADSDARS). Gln775 is a binding site for Mg(2+). Residues 939 to 950 (LEKETVMERKAP) are compositionally biased toward basic and acidic residues. Residues 939–962 (LEKETVMERKAPEPSQGLPRAMSS) are disordered. The region spanning 1013–1307 (LSLLVFSQLL…MVRNLADMEI (295 aa)) is the ABC transmembrane type-1 2 domain. The chain crosses the membrane as a helical span at residues 1014 to 1031 (SLLVFSQLLKHMVLVAID). Topologically, residues 1032 to 1067 (YWLAKWTDSALVLSPAARNCSLSQECALDQSVYAMV) are extracellular. Residue Asn1050 is glycosylated (N-linked (GlcNAc...) asparagine). The helical transmembrane segment at 1068–1084 (FTVLCSLGIALCLVTSV) threads the bilayer. Over 1085-1143 (TVEWTGLKVAKRLHRSLLNRIILAPMRFFETTPLGSILNRFSSDCNTIDQHIPSTLECL) the chain is Cytoplasmic. A helical transmembrane segment spans residues 1144–1161 (SRSTLLCVSALAVISYVT). A topological domain (extracellular) is located at residue Pro1162. Residues 1163–1175 (VFLVALLPLAVVC) traverse the membrane as a helical segment. Topologically, residues 1176 to 1249 (YFIQKYFRVA…FLTAANRWLE (74 aa)) are cytoplasmic. A helical transmembrane segment spans residues 1250 to 1265 (VRMEYIGACVVLIAAA). Topologically, residues 1266 to 1281 (TSISNSLHRELSAGLV) are extracellular. A helical transmembrane segment spans residues 1282–1297 (GLGLTYALMVSNYLNW). The Cytoplasmic portion of the chain corresponds to 1298 to 1582 (MVRNLADMEI…VFASFVRADK (285 aa)). One can recognise an ABC transporter 2 domain in the interval 1345–1579 (IQIQNLSVRY…KDSVFASFVR (235 aa)). Thr1381, Gly1382, Gly1384, Lys1385, Ser1386, and Ser1387 together coordinate ADP. ATP is bound at residue Ser1483.

This sequence belongs to the ABC transporter superfamily. ABCC family. Conjugate transporter (TC 3.A.1.208) subfamily. As to quaternary structure, forms an heterooctamer with KCNJ11; four ABCC8/SUR1 molecules interact with one KCNJ11 homotetramer.

It is found in the cell membrane. Its activity is regulated as follows. KATP channels are regulated by cytoplasmic ATP/ADP ratios; ATP inhibits the channel by closing the pore, while ADP activates the channel. Activated by phosphatidylinositol 4,5-biphosphate (PtdIns(4,5)P2). Regulator subunit of pancreatic ATP-sensitive potassium channel (KATP), playing a major role in the regulation of insulin release. In pancreatic cells, it forms KATP channels with KCNJ11; KCNJ11 forms the channel pore while ABCC8 is required for activation and regulation. The protein is ATP-binding cassette sub-family C member 8 (Abcc8) of Rattus norvegicus (Rat).